We begin with the raw amino-acid sequence, 447 residues long: Serine/threonine-protein phosphatase 2A 55 kDa regulatory subunit B delta isoform (447 aa).

7 WD repeats span residues 26–65, 91–132, 175–213, 224–264, 283–321, 338–379, and 414–447; these read AEAD…KSRP, EIEE…KRVE, AHTY…RSFN, ELTE…LCDR, EIIS…RPVE, ENDC…DITL, and DFNK…DKVN.

This sequence belongs to the phosphatase 2A regulatory subunit B family. PP2A consists of a common heterodimeric core enzyme, composed of a 36 kDa catalytic subunit (subunit C) and a 65 kDa constant regulatory subunit (PR65 or subunit A), that associates with a variety of regulatory subunits. Proteins that associate with the core dimer include three families of regulatory subunits B (the R2/B/PR55/B55, R3/B''/PR72/PR130/PR59 and R5/B'/B56 families), the 48 kDa variable regulatory subunit, viral proteins, and cell signaling molecules. Interacts with ensa (when phosphorylated at 'Ser-67') and arpp19 (when phosphorylated at 'Ser-67'), leading to inhibit PP2A activity.

It localises to the cytoplasm. Substrate-recognition subunit of protein phosphatase 2A (PP2A) that plays a key role in cell cycle by controlling mitosis entry and exit. The activity of PP2A complexes containing ppp2r2d (PR55-delta) fluctuate during the cell cycle: the activity is high in interphase and low in mitosis. During mitosis, activity of PP2A is inhibited via interaction with phosphorylated ensa and arpp19 inhibitors. PP2A complexes containing ppp2r2d (PR55-delta) also regulate the activity of TGF-beta/Activin/Nodal signaling by restricting receptor activity. Within the PP2A complexes, the B regulatory subunits modulate substrate selectivity and catalytic activity, and may also direct the localization of the catalytic enzyme to a particular subcellular compartment. This chain is Serine/threonine-protein phosphatase 2A 55 kDa regulatory subunit B delta isoform (ppp2r2d), found in Xenopus tropicalis (Western clawed frog).